The following is an 80-amino-acid chain: Putative membrane protein insertion efficiency factor (80 aa).

Residues Ser60–Glu80 form a disordered region. Basic and acidic residues predominate over residues Thr62–Glu80.

The protein belongs to the UPF0161 family.

It localises to the cell membrane. Its function is as follows. Could be involved in insertion of integral membrane proteins into the membrane. The chain is Putative membrane protein insertion efficiency factor from Streptococcus pneumoniae serotype 4 (strain ATCC BAA-334 / TIGR4).